The following is a 198-amino-acid chain: ATP synthase subunit b (198 aa).

The chain crosses the membrane as a helical span at residues 25 to 45; sequence PLSELLIGTLAFGLLVAFFFW.

The protein belongs to the ATPase B chain family. F-type ATPases have 2 components, F(1) - the catalytic core - and F(0) - the membrane proton channel. F(1) has five subunits: alpha(3), beta(3), gamma(1), delta(1), epsilon(1). F(0) has three main subunits: a(1), b(2) and c(10-14). The alpha and beta chains form an alternating ring which encloses part of the gamma chain. F(1) is attached to F(0) by a central stalk formed by the gamma and epsilon chains, while a peripheral stalk is formed by the delta and b chains.

The protein resides in the cell membrane. F(1)F(0) ATP synthase produces ATP from ADP in the presence of a proton or sodium gradient. F-type ATPases consist of two structural domains, F(1) containing the extramembraneous catalytic core and F(0) containing the membrane proton channel, linked together by a central stalk and a peripheral stalk. During catalysis, ATP synthesis in the catalytic domain of F(1) is coupled via a rotary mechanism of the central stalk subunits to proton translocation. Functionally, component of the F(0) channel, it forms part of the peripheral stalk, linking F(1) to F(0). This chain is ATP synthase subunit b, found in Frankia alni (strain DSM 45986 / CECT 9034 / ACN14a).